Here is a 103-residue protein sequence, read N- to C-terminus: UPF0145 protein NT01CX_0170 (103 aa).

This sequence belongs to the UPF0145 family.

The polypeptide is UPF0145 protein NT01CX_0170 (Clostridium novyi (strain NT)).